The chain runs to 1818 residues: Protein encore (1818 aa).

3 disordered regions span residues 47-68 (ANSSGVGSGSGPGPGSGAGVSG), 123-282 (SAAG…NSSN), and 317-413 (AERH…GFIS). The segment covering 52–66 (VGSGSGPGPGSGAGV) has biased composition (gly residues). Residues 124–137 (AAGSSNLGRQNSFG) show a composition bias toward polar residues. Residues 141–152 (GNMKGKHLTRSH) show a composition bias toward basic residues. 4 stretches are compositionally biased toward low complexity: residues 156-179 (ESTSPPRTPTPRAASEQQQQQLQG), 186-199 (NNNNINSSSKAQSA), 217-233 (QQPQQQQQQQQQQQQSV), and 266-282 (NSNGSGMEFNNNNNSSN). Phosphoserine occurs at positions 267 and 270. Residues 317 to 328 (AERHDRHERHEM) are compositionally biased toward basic and acidic residues. Serine 336 is subject to Phosphoserine. Positions 338–348 (NHDEEPYHYEP) are enriched in basic and acidic residues. Composition is skewed to low complexity over residues 372 to 381 (NLGGSSSGSI) and 391 to 410 (NCNNMSNNGQSNNSSNNTSG). The R3H domain occupies 444-508 (RNILLKIEKD…QCVIVAVAKN (65 aa)). Residues 510–576 (RIPEIRFQSL…ARSRIFSRTG (67 aa)) form the SUZ domain. Position 535 is a phosphoserine (serine 535). The segment covering 557 to 568 (FEEREEDYDRAR) has biased composition (basic and acidic residues). 6 disordered regions span residues 557-806 (FEER…SYEQ), 885-916 (QEQEQEPMAGPSSSGSATSSVGITELPSSQTP), 936-959 (PYSQCEVKTPSQNHAPSAAVEEPK), 1176-1249 (GQAP…YNPS), 1332-1648 (AAAG…LVSH), and 1684-1709 (GAGASGAAGSNGGHQPGGGGGARSHI). The segment covering 592-606 (YGGWEQQQQQQKQSQ) has biased composition (low complexity). The span at 644-655 (NYGGPPSSGGPG) shows a compositional bias: gly residues. Positions 678 to 695 (QDSTGSTPWRLSPSSSGS) are enriched in polar residues. A compositionally biased stretch (low complexity) spans 713–771 (SGNQYQSQNQGNSSSGGYNNYRKSSPHQQQQSQQQQQSQQHHQQQLQQPQQLHQQSSQQ). Residues 772 to 784 (YATTELSCSSTES) are compositionally biased toward polar residues. Over residues 893 to 904 (AGPSSSGSATSS) the composition is skewed to low complexity. Residues 1176 to 1197 (GQAPMQQQAPHTGAGTTTGPPT) are compositionally biased toward low complexity. Residues 1220–1231 (SSNGSVVTSSAY) show a composition bias toward polar residues. The span at 1381–1392 (ASQSAPSTPAAP) shows a compositional bias: low complexity. The segment covering 1430–1443 (TPHYYQGQNSNEGY) has biased composition (polar residues). Residues 1503–1521 (ASPSSVSLGGASSSGGANS) show a composition bias toward low complexity. 2 stretches are compositionally biased toward polar residues: residues 1554–1565 (AANSSPGVSSYE) and 1579–1596 (FRSQKSMNQDYRRSVSQR). A compositionally biased stretch (low complexity) spans 1608 to 1633 (SHESSNNSPNSIVGSQSNSAANTPNA). Residues 1684-1705 (GAGASGAAGSNGGHQPGGGGGA) are compositionally biased toward gly residues.

In terms of assembly, interacts with hfp; however, given the nuclear localization of hfp, the relevance of such interaction is unclear. Interacts with CycE, Cul1, and the SCF-proteasome complex. As to expression, expressed in all germline cells of the germarium including the stem cells and dividing cystocytes.

It is found in the cytoplasm. In terms of biological role, required for the regulation of germline mitosis, karyosome formation, and establishment of dorsoventral (DS) polarity of the egg and embryo. Involved in proper grk mRNA localization and translation in the oocyte. May control germline mitosis by facilitating the cyclin E (CycE) proteolysis by the SCF-ubiquitin-proteasome complex. The protein is Protein encore (enc) of Drosophila melanogaster (Fruit fly).